We begin with the raw amino-acid sequence, 161 residues long: Phosphopantetheine adenylyltransferase (161 aa).

A substrate-binding site is contributed by Thr10. Residues 10 to 11 (TF) and His18 contribute to the ATP site. Lys42, Met74, and Arg88 together coordinate substrate. ATP is bound by residues 89–91 (GVR), Glu99, and 124–130 (LSFVSSS).

This sequence belongs to the bacterial CoaD family. In terms of assembly, homohexamer. Requires Mg(2+) as cofactor.

The protein resides in the cytoplasm. The enzyme catalyses (R)-4'-phosphopantetheine + ATP + H(+) = 3'-dephospho-CoA + diphosphate. It participates in cofactor biosynthesis; coenzyme A biosynthesis; CoA from (R)-pantothenate: step 4/5. Functionally, reversibly transfers an adenylyl group from ATP to 4'-phosphopantetheine, yielding dephospho-CoA (dPCoA) and pyrophosphate. The protein is Phosphopantetheine adenylyltransferase of Proteus mirabilis (strain HI4320).